Reading from the N-terminus, the 155-residue chain is Large ribosomal subunit protein eL24 (155 aa).

Residues 119 to 155 (VKAAKKAAAPAPAKKSAPKQKAAKVTQKAAPRVGGKR) are disordered. Over residues 124–133 (KAAAPAPAKK) the composition is skewed to low complexity.

Belongs to the eukaryotic ribosomal protein eL24 family.

This chain is Large ribosomal subunit protein eL24 (RpL24), found in Drosophila melanogaster (Fruit fly).